A 117-amino-acid chain; its full sequence is Large ribosomal subunit protein uL18 (117 aa).

A compositionally biased stretch (basic residues) spans 1 to 17; that stretch reads MNLSRNKARKVKQKRLR. Residues 1–23 are disordered; the sequence is MNLSRNKARKVKQKRLRAKSELS.

Belongs to the universal ribosomal protein uL18 family. In terms of assembly, part of the 50S ribosomal subunit; part of the 5S rRNA/L5/L18/L25 subcomplex. Contacts the 5S and 23S rRNAs.

This is one of the proteins that bind and probably mediate the attachment of the 5S RNA into the large ribosomal subunit, where it forms part of the central protuberance. In Mycoplasmopsis synoviae (strain 53) (Mycoplasma synoviae), this protein is Large ribosomal subunit protein uL18.